A 185-amino-acid polypeptide reads, in one-letter code: Small ribosomal subunit protein uS4c (185 aa).

The S4 RNA-binding domain maps to 72–134; sequence MRLDNVIFRL…PTSCNALKGE (63 aa). Residues 132–154 form a disordered region; it reads KGESPGGGETPDHLTASLSEGSR.

Belongs to the universal ribosomal protein uS4 family. As to quaternary structure, part of the 30S ribosomal subunit. Contacts protein S5. The interaction surface between S4 and S5 is involved in control of translational fidelity.

It is found in the plastid. It localises to the chloroplast. Functionally, one of the primary rRNA binding proteins, it binds directly to 16S rRNA where it nucleates assembly of the body of the 30S subunit. With S5 and S12 plays an important role in translational accuracy. The polypeptide is Small ribosomal subunit protein uS4c (rps4) (Woodwardia radicans (Rooting chainfern)).